The primary structure comprises 829 residues: Periplasmic nitrate reductase (829 aa).

Positions 1–30 (MKMTRRAFVKANAAASAAAVAGITLPASAA) form a signal peptide, tat-type signal. Residues 41-97 (ITWDKAPCRFCGTGCSVLVGTQNGKVVATQGDPEAPVNKGLNCIKGYFLSKIMYGQD) form the 4Fe-4S Mo/W bis-MGD-type domain. [4Fe-4S] cluster-binding residues include Cys48, Cys51, Cys55, and Cys83. Residues Lys85, Gln152, Asn177, Cys181, 214–221 (WGSNMAEM), 245–249 (STYYH), 264–266 (QSD), Met374, Gln378, Asn484, 510–511 (SD), Lys533, Asp560, and 718–727 (TGRVLEHWHT) contribute to the Mo-bis(molybdopterin guanine dinucleotide) site. Phe794 serves as a coordination point for substrate. Mo-bis(molybdopterin guanine dinucleotide) contacts are provided by Asn802 and Lys819.

The protein belongs to the prokaryotic molybdopterin-containing oxidoreductase family. NasA/NapA/NarB subfamily. Component of the periplasmic nitrate reductase NapAB complex composed of NapA and NapB. Requires [4Fe-4S] cluster as cofactor. The cofactor is Mo-bis(molybdopterin guanine dinucleotide). Predicted to be exported by the Tat system. The position of the signal peptide cleavage has not been experimentally proven.

The protein resides in the periplasm. The catalysed reaction is 2 Fe(II)-[cytochrome] + nitrate + 2 H(+) = 2 Fe(III)-[cytochrome] + nitrite + H2O. Its function is as follows. Catalytic subunit of the periplasmic nitrate reductase complex NapAB. Receives electrons from NapB and catalyzes the reduction of nitrate to nitrite. The sequence is that of Periplasmic nitrate reductase from Vibrio vulnificus (strain YJ016).